The chain runs to 344 residues: Phenylalanine--tRNA ligase alpha subunit (344 aa).

Glu-258 is a Mg(2+) binding site.

It belongs to the class-II aminoacyl-tRNA synthetase family. Phe-tRNA synthetase alpha subunit type 1 subfamily. Tetramer of two alpha and two beta subunits. Mg(2+) serves as cofactor.

The protein resides in the cytoplasm. It catalyses the reaction tRNA(Phe) + L-phenylalanine + ATP = L-phenylalanyl-tRNA(Phe) + AMP + diphosphate + H(+). The chain is Phenylalanine--tRNA ligase alpha subunit from Thiobacillus denitrificans (strain ATCC 25259 / T1).